The chain runs to 583 residues: Alpha-1,3-arabinosyltransferase XAT2 (583 aa).

The Cytoplasmic portion of the chain corresponds to 1–21; the sequence is MKPVERAKLVRSLRQESRRLR. Residues 22–42 form a helical; Signal-anchor for type II membrane protein membrane-spanning segment; it reads LLVLVIGFFLVTLTFVVISKP. Over 43–583 the chain is Lumenal; the sequence is DALLFNLNGR…LLEVLDQLNQ (541 aa). Positions 73–178 are disordered; the sequence is RRSADTFPAA…NGKQEDGKPN (106 aa). Basic and acidic residues-rich tracts occupy residues 102–121 and 135–146; these read TSEE…KNEE and EDNKNGEEEGHT. The segment covering 149–160 has biased composition (polar residues); it reads SKVTLPTVSNYT. Asn158 carries N-linked (GlcNAc...) asparagine glycosylation. The span at 162 to 178 shows a compositional bias: basic and acidic residues; that stretch reads RDAEDTDNGKQEDGKPN. Asn229, Asn382, Asn450, and Asn485 each carry an N-linked (GlcNAc...) asparagine glycan.

It belongs to the glycosyltransferase 61 family.

The protein localises to the golgi apparatus membrane. It participates in glycan metabolism. Functionally, glycosyltransferase involved in the arabinosylation of xylan, the major hemicellulose (non-cellulosic component) of primary and secondary walls of angiosperms. Possesses alpha-1,3-arabinosyltransferase activity, transferring an arabinofuranose residue to the xylan backbone. This is Alpha-1,3-arabinosyltransferase XAT2 from Oryza sativa subsp. japonica (Rice).